The sequence spans 431 residues: Mediator of RNA polymerase II transcription subunit 2 (431 aa).

A Phosphoserine modification is found at serine 6. Residues 105 to 140 (GKEKEKEREEAEKKRAEQENMRKVREQEELKKRQEL) show a composition bias toward basic and acidic residues. A disordered region spans residues 105 to 178 (GKEKEKEREE…ANTTDANGSK (74 aa)). Residues 143 to 152 (ASQQQQLQQN) are compositionally biased toward low complexity. Positions 162–178 (NFSTTAPANTTDANGSK) are enriched in polar residues. Serine 208 carries the post-translational modification Phosphoserine; by CDK8. The tract at residues 284-399 (NNINSTKNGK…GDNPPPADNG (116 aa)) is disordered. Over residues 304-313 (NGDEKNKNNN) the composition is skewed to basic and acidic residues. Residues 318-365 (NNNNSSEKNNNNNNNNNNNNDDNGNNNNNNSGNDNNNTTNNDSNNKNN) are compositionally biased toward low complexity. Polar residues predominate over residues 366 to 387 (SITTGNDNENIVNNDLPTTVVS).

The protein belongs to the mediator complex subunit 2 family. Component of the Mediator complex, which is composed of at least 21 subunits that form three structurally distinct submodules. The Mediator head module contains MED6, MED8, MED11, SRB4/MED17, SRB5/MED18, ROX3/MED19, SRB2/MED20 and SRB6/MED22, the middle module contains MED1, MED4, NUT1/MED5, MED7, CSE2/MED9, NUT2/MED10, SRB7/MED21 and SOH1/MED31, and the tail module contains MED2, PGD1/MED3, RGR1/MED14, GAL11/MED15 and SIN4/MED16. The head and the middle modules interact directly with RNA polymerase II, whereas the elongated tail module interacts with gene-specific regulatory proteins.

It is found in the nucleus. Its function is as follows. Component of the Mediator complex, a coactivator involved in the regulated transcription of nearly all RNA polymerase II-dependent genes. Mediator functions as a bridge to convey information from gene-specific regulatory proteins to the basal RNA polymerase II transcription machinery. The Mediator complex, having a compact conformation in its free form, is recruited to promoters by direct interactions with regulatory proteins and serves for the assembly of a functional preinitiation complex with RNA polymerase II and the general transcription factors. The Mediator complex unfolds to an extended conformation and partially surrounds RNA polymerase II, specifically interacting with the unphosphorylated form of the C-terminal domain (CTD) of RNA polymerase II. The Mediator complex dissociates from the RNA polymerase II holoenzyme and stays at the promoter when transcriptional elongation begins. The polypeptide is Mediator of RNA polymerase II transcription subunit 2 (MED2) (Saccharomyces cerevisiae (strain ATCC 204508 / S288c) (Baker's yeast)).